The chain runs to 108 residues: Large ribosomal subunit protein uL24 (108 aa).

The protein belongs to the universal ribosomal protein uL24 family. Part of the 50S ribosomal subunit.

One of two assembly initiator proteins, it binds directly to the 5'-end of the 23S rRNA, where it nucleates assembly of the 50S subunit. Functionally, one of the proteins that surrounds the polypeptide exit tunnel on the outside of the subunit. In Pelobacter propionicus (strain DSM 2379 / NBRC 103807 / OttBd1), this protein is Large ribosomal subunit protein uL24.